A 272-amino-acid polypeptide reads, in one-letter code: Interleukin-2 receptor subunit alpha (272 aa).

The first 21 residues, M1–A21, serve as a signal peptide directing secretion. The region spanning E22 to S84 is the Sushi 1 domain. The Extracellular portion of the chain corresponds to E22–Q240. Cystine bridges form between C24–C67, C49–C80, and C51–C82. Residues N70 and N89 are each glycosylated (N-linked (GlcNAc...) asparagine). The segment covering A87–P98 has biased composition (polar residues). A disordered region spans residues A87–M109. The region spanning G123–G186 is the Sushi 2 domain. 2 disulfides stabilise this stretch: C125–C168 and C152–C184. A disordered region spans residues G186–R213. Residues V241–L259 form a helical membrane-spanning segment. At T260–I272 the chain is on the cytoplasmic side.

In terms of assembly, non-covalent dimer of an alpha and a beta subunit. IL2R exists in 3 different forms: a high affinity dimer, an intermediate affinity monomer (beta subunit), and a low affinity monomer (alpha subunit). The high and intermediate affinity forms also associate with a gamma subunit.

It is found in the membrane. Functionally, receptor for interleukin-2. The receptor is involved in the regulation of immune tolerance by controlling regulatory T cells (TREGs) activity. TREGs suppress the activation and expansion of autoreactive T-cells. The polypeptide is Interleukin-2 receptor subunit alpha (IL2RA) (Macaca mulatta (Rhesus macaque)).